The primary structure comprises 301 residues: Protease HtpX homolog (301 aa).

A run of 2 helical transmembrane segments spans residues 11 to 31 and 34 to 54; these read VLLLGGMWVVLLAIGWAIAGA and NSAFIMIFAVVGLLGTAYSYW. A Zn(2+)-binding site is contributed by His-138. The active site involves Glu-139. His-142 contacts Zn(2+). A run of 2 helical transmembrane segments spans residues 154–174 and 188–208; these read AAAVAGIITSAAQMLQFAAIF and LVGLLLALLAPLAATVIQLAI. Glu-213 contacts Zn(2+).

This sequence belongs to the peptidase M48B family. It depends on Zn(2+) as a cofactor.

Its subcellular location is the cell membrane. The chain is Protease HtpX homolog from Kocuria rhizophila (strain ATCC 9341 / DSM 348 / NBRC 103217 / DC2201).